Here is a 323-residue protein sequence, read N- to C-terminus: ADP/ATP translocase 4 (323 aa).

Residues 1–23 are Mitochondrial intermembrane-facing; the sequence is MQREPPKRKQEKKVEKGLFDATS. Residues 22–114 form a Solcar 1 repeat; that stretch reads TSFGKDLLAG…FAFKDKYKQL (93 aa). Residues 24 to 53 traverse the membrane as a helical segment; that stretch reads FGKDLLAGGVAAAVSKTTVAPIERVKLLLQ. Topologically, residues 54 to 90 are mitochondrial matrix; that stretch reads VQASSKQISPEAQYKGIVDCLVRIPREQGFLSYWRGN. A helical transmembrane segment spans residues 91–115; sequence LANVIRYFPTQALNFAFKDKYKQLF. R96 and K108 together coordinate ADP. Residues 116-125 are Mitochondrial intermembrane-facing; the sequence is MSGVNKEKQF. A helical membrane pass occupies residues 126–146; that stretch reads WRWFLANLASGGAAGATSLCV. 2 Solcar repeats span residues 127–217 and 224–311; these read RWFL…VKGL and THFL…IKDL. The Mitochondrial matrix portion of the chain corresponds to 147 to 194; sequence VYPLDFARTRLGADIGKGPEERQFKGLGDCIMKIAKSDGIVGLYQGFG. Residues 195 to 215 form a helical membrane-spanning segment; that stretch reads VSVQGIIVYRASYFGAYDTVK. Over 216-226 the chain is Mitochondrial intermembrane; it reads GLLPKPKETHF. The helical transmembrane segment at 227-247 threads the bilayer; the sequence is LVSFFIAQVVTTCSGILSYPF. At 248–287 the chain is on the mitochondrial matrix side; it reads DTVRRRMMMQSGEAERQYKGTLDCFMKIYQQEGIGAFFRG. R251 lines the ADP pocket. The tract at residues 251 to 256 is important for transport activity; it reads RRRMMM. The short motif at 251–256 is the Nucleotide carrier signature motif element; sequence RRRMMM. The chain crosses the membrane as a helical span at residues 288-305; the sequence is AFSNILRGTGGALVLVLY. At 306-323 the chain is on the mitochondrial intermembrane side; that stretch reads DKIKDLLNIDIGGSSSGD.

The protein belongs to the mitochondrial carrier (TC 2.A.29) family. In terms of assembly, monomer.

The protein resides in the mitochondrion inner membrane. The protein localises to the membrane. It is found in the cell projection. Its subcellular location is the cilium. It localises to the flagellum membrane. The catalysed reaction is ADP(in) + ATP(out) = ADP(out) + ATP(in). The enzyme catalyses dATP(out) + ADP(in) = dATP(in) + ADP(out). It catalyses the reaction dADP(in) + ADP(out) = dADP(out) + ADP(in). It carries out the reaction H(+)(in) = H(+)(out). The matrix-open state (m-state) is inhibited by the membrane-permeable bongkrekic acid (BKA). The cytoplasmic-open state (c-state) is inhibited by the membrane-impermeable toxic inhibitor carboxyatractyloside (CATR). Proton transporter activity is inhibited by ADP:ATP antiporter activity. ADP:ATP antiporter that mediates import of ADP into the mitochondrial matrix for ATP synthesis, and export of ATP out to fuel the cell. Cycles between the cytoplasmic-open state (c-state) and the matrix-open state (m-state): operates by the alternating access mechanism with a single substrate-binding site intermittently exposed to either the cytosolic (c-state) or matrix (m-state) side of the inner mitochondrial membrane. Specifically required during spermatogenesis, probably to mediate ADP:ATP exchange in spermatocytes. Large ATP supplies from mitochondria may be critical for normal progression of spermatogenesis during early stages of meiotic prophase I, including DNA double-strand break repair and chromosomal synapsis. In addition to its ADP:ATP antiporter activity, also involved in mitochondrial uncoupling and mitochondrial permeability transition pore (mPTP) activity. Plays a role in mitochondrial uncoupling by acting as a proton transporter: proton transport uncouples the proton flows via the electron transport chain and ATP synthase to reduce the efficiency of ATP production and cause mitochondrial thermogenesis. Proton transporter activity is inhibited by ADP:ATP antiporter activity, suggesting that SLC25A31/ANT4 acts as a master regulator of mitochondrial energy output by maintaining a delicate balance between ATP production (ADP:ATP antiporter activity) and thermogenesis (proton transporter activity). Proton transporter activity requires free fatty acids as cofactor, but does not transport it. Among nucleotides, may also exchange ADP for dATP and dADP. Also plays a key role in mPTP opening, a non-specific pore that enables free passage of the mitochondrial membranes to solutes of up to 1.5 kDa, and which contributes to cell death. It is however unclear if SLC25A31/ANT4 constitutes a pore-forming component of mPTP or regulates it. The polypeptide is ADP/ATP translocase 4 (Bos taurus (Bovine)).